Reading from the N-terminus, the 256-residue chain is Flap endonuclease Xni (256 aa).

Asp-105 provides a ligand contact to Mg(2+). The 87-residue stretch at 164–250 folds into the 5'-3' exonuclease domain; the sequence is SQFIDFLAMA…LNTRLANFRV (87 aa). 5 residues coordinate K(+): Met-172, Ala-173, Pro-181, Ile-183, and Ile-186. An interaction with DNA region spans residues 185-190; the sequence is GIGPKS.

Belongs to the Xni family. Mg(2+) serves as cofactor. K(+) is required as a cofactor.

Its function is as follows. Has flap endonuclease activity. During DNA replication, flap endonucleases cleave the 5'-overhanging flap structure that is generated by displacement synthesis when DNA polymerase encounters the 5'-end of a downstream Okazaki fragment. This chain is Flap endonuclease Xni, found in Shewanella loihica (strain ATCC BAA-1088 / PV-4).